The sequence spans 1461 residues: Formin-3 (1461 aa).

Disordered stretches follow at residues 1–67 and 431–457; these read MASK…SDDN and YREE…RPTT. The segment covering 12–28 has biased composition (low complexity); that stretch reads TSRSIQSRNSSYSTSSN. 2 stretches are compositionally biased toward polar residues: residues 29-53 and 438-457; these read ERIG…STND and PHGN…RPTT. Residues 92 to 508 form the GBD/FH3 domain; sequence SETEQLRKIY…KIQKSMQLLT (417 aa). The interaction with tea4 stretch occupies residues 137–515; it reads QHTVLDEATY…LLTHTLEALE (379 aa). Residues 540–639 adopt a coiled-coil conformation; it reads GTAEEIAEYK…VQNSNEQHLQ (100 aa). Residues 683–811 are disordered; it reads GIPVRVHTPS…EPKIDETSLT (129 aa). Residues 700–718 are compositionally biased toward low complexity; sequence SFSGSEISSSPSPLLPDVS. The segment covering 731 to 784 has biased composition (pro residues); sequence SPPPPPPAVIVPTPAPAPIPVPPPAPIMGGPPPPPPPPGVAGAGPPPPPPPPPA. Residues 801–811 are compositionally biased toward basic and acidic residues; it reads PEPKIDETSLT. One can recognise an FH2 domain in the interval 845-1257; it reads LRDLHKPTRP…RIMSEDRDKL (413 aa). Disordered stretches follow at residues 1268–1337 and 1416–1461; these read AKYR…AEEK and ERLQ…RQKQ. Composition is skewed to basic and acidic residues over residues 1273–1315 and 1325–1337; these read KREL…KTGD and MEDL…AEEK. The segment covering 1445 to 1454 has biased composition (polar residues); that stretch reads TNGSNASNLV.

It belongs to the formin homology family. Interacts with rax2, rho3 and tea4. Interacts with tea1 in the presence of tea4.

It is found in the cytoplasm. The protein resides in the cell cortex. The protein localises to the cell tip. Functionally, involved in controlling polarized cell growth. Required for interphase actin cable formation and microtubule organization. This chain is Formin-3 (for3), found in Schizosaccharomyces pombe (strain 972 / ATCC 24843) (Fission yeast).